The chain runs to 622 residues: Sodium/potassium/calcium exchanger 4 (622 aa).

Positions M1–G38 are cleaved as a signal peptide. Residues L39 to H97 lie on the Extracellular side of the membrane. N76 carries N-linked (GlcNAc...) asparagine glycosylation. Residues G98–C118 traverse the membrane as a helical segment. Over D119 to A142 the chain is Cytoplasmic. The Alpha-1 repeat unit spans residues V139–F179. Residues T143 to I163 form a helical membrane-spanning segment. The Extracellular portion of the chain corresponds to T164 to T172. Residues I173–G193 form a helical membrane-spanning segment. The Cytoplasmic segment spans residues Q194 to W200. A helical transmembrane segment spans residues W201 to I221. At Y222–E224 the chain is on the extracellular side. Residues E225 to M245 traverse the membrane as a helical segment. The Cytoplasmic portion of the chain corresponds to K246–F457. The interval A358 to E408 is disordered. Residues Q394–P404 are compositionally biased toward pro residues. The helical transmembrane segment at I458–I478 threads the bilayer. Residue G479 is a topological domain, extracellular. A helical membrane pass occupies residues Y480–V500. An Alpha-2 repeat occupies A495–N526. Topologically, residues P501–N526 are cytoplasmic. A helical transmembrane segment spans residues V527–Y547. The Extracellular portion of the chain corresponds to G548–G557. The chain crosses the membrane as a helical span at residues L558 to L578. The Cytoplasmic segment spans residues N579 to K586. A helical transmembrane segment spans residues L587 to F607. Over N608–D622 the chain is Extracellular.

It belongs to the Ca(2+):cation antiporter (CaCA) (TC 2.A.19) family. SLC24A subfamily. Expressed in late secretory-stage and maturation-stage ameloblasts, with significantly increased expression during the late stages of amelogenesis (at protein level). Widely expressed in most regions of the brain, including hippocampus, neocortex, thalamus, striatum and olfactory bulb. Expressed in the olfactory sensory neurons.

The protein resides in the cell membrane. The protein localises to the cytoplasm. It carries out the reaction Ca(2+)(out) + K(+)(out) + 4 Na(+)(in) = Ca(2+)(in) + K(+)(in) + 4 Na(+)(out). In terms of biological role, calcium, potassium:sodium antiporter that transports 1 Ca(2+) and 1 K(+) in exchange for 4 Na(+). Controls the rapid response termination and proper regulation of adaptation in olfactory sensory neurons (OSNs) which subsequently influences how odor information is encoded and perceived. May play a role in calcium transport during amelogenesis. The protein is Sodium/potassium/calcium exchanger 4 of Mus musculus (Mouse).